A 433-amino-acid chain; its full sequence is Dihydroorotase (433 aa).

2 residues coordinate Zn(2+): His63 and His65. Substrate contacts are provided by residues His65–Arg67 and Asn97. 3 residues coordinate Zn(2+): Asp155, His182, and His235. Substrate is bound at residue Asn283. Asp310 lines the Zn(2+) pocket. Asp310 is a catalytic residue. His314 lines the substrate pocket.

The protein belongs to the metallo-dependent hydrolases superfamily. DHOase family. Class I DHOase subfamily. Zn(2+) serves as cofactor.

The catalysed reaction is (S)-dihydroorotate + H2O = N-carbamoyl-L-aspartate + H(+). It functions in the pathway pyrimidine metabolism; UMP biosynthesis via de novo pathway; (S)-dihydroorotate from bicarbonate: step 3/3. In terms of biological role, catalyzes the reversible cyclization of carbamoyl aspartate to dihydroorotate. The chain is Dihydroorotase from Anaeromyxobacter sp. (strain K).